Consider the following 490-residue polypeptide: Cytochrome P450 2C8 (490 aa).

Substrate is bound by residues serine 100, asparagine 204, and arginine 241. Residue serine 100 is modified to Phosphoserine. Heme is bound at residue cysteine 435.

It belongs to the cytochrome P450 family. It depends on heme as a cofactor.

It is found in the endoplasmic reticulum membrane. The protein localises to the microsome membrane. It carries out the reaction an organic molecule + reduced [NADPH--hemoprotein reductase] + O2 = an alcohol + oxidized [NADPH--hemoprotein reductase] + H2O + H(+). It catalyses the reaction (5Z,8Z,11Z,14Z)-eicosatetraenoate + reduced [NADPH--hemoprotein reductase] + O2 = (11R,12S)-epoxy-(5Z,8Z,14Z)-eicosatrienoate + oxidized [NADPH--hemoprotein reductase] + H2O + H(+). The catalysed reaction is (5Z,8Z,11Z,14Z)-eicosatetraenoate + reduced [NADPH--hemoprotein reductase] + O2 = (11S,12R)-epoxy-(5Z,8Z,14Z)-eicosatrienoate + oxidized [NADPH--hemoprotein reductase] + H2O + H(+). The enzyme catalyses (5Z,8Z,11Z,14Z)-eicosatetraenoate + reduced [NADPH--hemoprotein reductase] + O2 = (14R,15S)-epoxy-(5Z,8Z,11Z)-eicosatrienoate + oxidized [NADPH--hemoprotein reductase] + H2O + H(+). It carries out the reaction (5Z,8Z,11Z,14Z)-eicosatetraenoate + reduced [NADPH--hemoprotein reductase] + O2 = (14S,15R)-epoxy-(5Z,8Z,11Z)-eicosatrienoate + oxidized [NADPH--hemoprotein reductase] + H2O + H(+). It catalyses the reaction (5Z,8Z,11Z,14Z,17Z)-eicosapentaenoate + reduced [NADPH--hemoprotein reductase] + O2 = 11,12-epoxy-(5Z,8Z,14Z,17Z)-eicosatetraenoate + oxidized [NADPH--hemoprotein reductase] + H2O + H(+). The catalysed reaction is (5Z,8Z,11Z,14Z,17Z)-eicosapentaenoate + reduced [NADPH--hemoprotein reductase] + O2 = 14,15-epoxy-(5Z,8Z,11Z,17Z)-eicosatetraenoate + oxidized [NADPH--hemoprotein reductase] + H2O + H(+). The enzyme catalyses (5Z,8Z,11Z,14Z,17Z)-eicosapentaenoate + reduced [NADPH--hemoprotein reductase] + O2 = (17R,18S)-epoxy-(5Z,8Z,11Z,14Z)-eicosatetraenoate + oxidized [NADPH--hemoprotein reductase] + H2O + H(+). It carries out the reaction (5Z,8Z,11Z,14Z,17Z)-eicosapentaenoate + reduced [NADPH--hemoprotein reductase] + O2 = (17S,18R)-epoxy-(5Z,8Z,11Z,14Z)-eicosatetraenoate + oxidized [NADPH--hemoprotein reductase] + H2O + H(+). It catalyses the reaction (4Z,7Z,10Z,13Z,16Z,19Z)-docosahexaenoate + reduced [NADPH--hemoprotein reductase] + O2 = (19R,20S)-epoxy-(4Z,7Z,10Z,13Z,16Z)-docosapentaenoate + oxidized [NADPH--hemoprotein reductase] + H2O + H(+). The catalysed reaction is (4Z,7Z,10Z,13Z,16Z,19Z)-docosahexaenoate + reduced [NADPH--hemoprotein reductase] + O2 = (19S,20R)-epoxy-(4Z,7Z,10Z,13Z,16Z)-docosapentaenoate + oxidized [NADPH--hemoprotein reductase] + H2O + H(+). The enzyme catalyses all-trans-retinoate + reduced [NADPH--hemoprotein reductase] + O2 = all-trans-4-hydroxyretinoate + oxidized [NADPH--hemoprotein reductase] + H2O + H(+). It carries out the reaction 17beta-estradiol + reduced [NADPH--hemoprotein reductase] + O2 = 16alpha,17beta-estriol + oxidized [NADPH--hemoprotein reductase] + H2O + H(+). It catalyses the reaction estrone + reduced [NADPH--hemoprotein reductase] + O2 = 16alpha-hydroxyestrone + oxidized [NADPH--hemoprotein reductase] + H2O + H(+). It participates in steroid metabolism. Its pathway is lipid metabolism; arachidonate metabolism. The protein operates within cofactor metabolism; retinol metabolism. In terms of biological role, a cytochrome P450 monooxygenase involved in the metabolism of various endogenous substrates, including fatty acids, steroid hormones and vitamins. Mechanistically, uses molecular oxygen inserting one oxygen atom into a substrate, and reducing the second into a water molecule, with two electrons provided by NADPH via cytochrome P450 reductase (NADPH--hemoprotein reductase). Primarily catalyzes the epoxidation of double bonds of polyunsaturated fatty acids (PUFA) with a preference for the last double bond. Catalyzes the hydroxylation of carbon-hydrogen bonds. Metabolizes all trans-retinoic acid toward its 4-hydroxylated form. Displays 16-alpha hydroxylase activity toward estrogen steroid hormones, 17beta-estradiol (E2) and estrone (E1). Plays a role in the oxidative metabolism of xenobiotics. It is the principal enzyme responsible for the metabolism of the anti-cancer drug paclitaxel (taxol). In Homo sapiens (Human), this protein is Cytochrome P450 2C8.